The chain runs to 60 residues: Potassium channel toxin alpha-KTx 12.5 (60 aa).

Positions 1–22 (MNKLPILIFMLLVCSMFISSDC) are cleaved as a signal peptide. Intrachain disulfides connect C30/C51, C36/C56, and C40/C58.

This sequence belongs to the short scorpion toxin superfamily. Potassium channel inhibitor family. Alpha-KTx 12 subfamily. Expressed by the venom gland.

It localises to the secreted. Its function is as follows. This recombinant toxin inhibits the mammalian voltage-gated potassium channels Kv1.3/KCNA3 (IC(50)=28 nM). Kv1.1/KCNA1 and Kv1.2/KCNA2 potassium channels are also weakly inhibited (IC(50)=1.73 uM and IC(50)=12.63 uM, respectively). The protein is Potassium channel toxin alpha-KTx 12.5 of Lychas mucronatus (Chinese swimming scorpion).